The primary structure comprises 146 residues: Hemoglobin subunit beta-1 (146 aa).

Residues 2-146 enclose the Globin domain; it reads KWTDKERAVI…VVSALGKQYC (145 aa). 2 residues coordinate heme b: His-63 and His-92.

It belongs to the globin family. In terms of assembly, heterotetramer of two alpha chains and two beta chains. As to expression, red blood cells.

In terms of biological role, involved in oxygen transport from gills to the various peripheral tissues. The chain is Hemoglobin subunit beta-1 from Lycodes reticulatus (Arctic eelpout).